Reading from the N-terminus, the 305-residue chain is Aquaporin-1 (305 aa).

Residues 1 to 34 form a disordered region; it reads MSSNDSNDTDKQHTRLDPTGVDDAYIPPEQPETK. Residues 1–48 lie on the Cytoplasmic side of the membrane; the sequence is MSSNDSNDTDKQHTRLDPTGVDDAYIPPEQPETKHHRFKISKDTLRNH. The helical transmembrane segment at 49-69 threads the bilayer; the sequence is FIAAAGEFCGTFMFLWCAYVI. The Extracellular segment spans residues 70-91; the sequence is CNVANHDVALVAAPDGSHPGQL. Residues 92–112 form a helical membrane-spanning segment; it reads IMIAIGFGFSVMFSIWCFAGV. The Cytoplasmic segment spans residues 113 to 136; the sequence is SGGALNPAMSLSLCLARAVSPTRC. Residues 118–120 carry the NPA 1 motif; the sequence is NPA. A helical membrane pass occupies residues 137 to 157; it reads VVMWVSQIVAGMAAGGAASAM. Residues 158–176 are Extracellular-facing; the sequence is TPGEVLFANSLGLGCSRTR. Residues 177-197 traverse the membrane as a helical segment; the sequence is GLFLEMFGTAILCLTVLMTAV. The Cytoplasmic portion of the chain corresponds to 198 to 203; that stretch reads EKRETN. A helical transmembrane segment spans residues 204–224; it reads FMAALPIGISLFIAHVALTAY. The Extracellular portion of the chain corresponds to 225–248; sequence TGTGVNPARSLGAAVAARYFPHYH. The NPA 2 signature appears at 230–232; it reads NPA. Residues 249-269 traverse the membrane as a helical segment; that stretch reads WIYWIGTLLGSILAWSVWQLL. The Cytoplasmic portion of the chain corresponds to 270 to 305; it reads QILDYTTYVTAEKAASTKEKAQKKGETSSSSAVAEV. Positions 286–295 are enriched in basic and acidic residues; the sequence is TKEKAQKKGE. The interval 286 to 305 is disordered; that stretch reads TKEKAQKKGETSSSSAVAEV. Residues 296 to 305 show a composition bias toward polar residues; the sequence is TSSSSAVAEV.

It belongs to the MIP/aquaporin (TC 1.A.8) family.

It is found in the endoplasmic reticulum membrane. Its subcellular location is the cell membrane. Its function is as follows. Water channel required to facilitate the transport of water across membranes. Involved in sporulation, freeze tolerance and osmotolerance. Is non-functional in most laboratory strains. This chain is Aquaporin-1 (AQY1), found in Saccharomyces cerevisiae (strain YJM789) (Baker's yeast).